The primary structure comprises 105 residues: Vacuolar ATPase assembly integral membrane protein VMA21 homolog (105 aa).

Residues 1–26 are disordered; that stretch reads MSTKNKKAAGGNGGAPKQTRQQSHDS. Over 1–36 the chain is Cytoplasmic; that stretch reads MSTKNKKAAGGNGGAPKQTRQQSHDSQDYSSFKTVL. A helical transmembrane segment spans residues 37–57; sequence FYCMLIVFLPVLTFFVLKGFV. The Lumenal segment spans residues 58 to 68; the sequence is LDQFLDISEVK. Residues 69 to 89 traverse the membrane as a helical segment; that stretch reads VNIASAVGAVVALHVALGLYI. Over 90-105 the chain is Cytoplasmic; that stretch reads YRAYFGAPGSKASKTD.

The protein belongs to the VMA21 family.

It localises to the endoplasmic reticulum membrane. The protein resides in the endoplasmic reticulum-Golgi intermediate compartment membrane. The protein localises to the cytoplasmic vesicle. Its subcellular location is the COPII-coated vesicle membrane. In terms of biological role, required for the assembly of the V0 complex of the vacuolar ATPase (V-ATPase) in the endoplasmic reticulum. The chain is Vacuolar ATPase assembly integral membrane protein VMA21 homolog from Drosophila yakuba (Fruit fly).